An 887-amino-acid polypeptide reads, in one-letter code: Phosphatidylinositol 3-kinase catalytic subunit type 3 (887 aa).

The region spanning 35 to 184 (YKAVLEDPML…LAKLTKAHRQ (150 aa)) is the C2 PI3K-type domain. A disordered region spans residues 149-170 (VEADGSEPTKTPGRTSSTLSED). Residues 156–170 (PTKTPGRTSSTLSED) show a composition bias toward polar residues. Position 163 is a phosphothreonine; by AMPK (threonine 163). Serine 165 carries the post-translational modification Phosphoserine; by AMPK. Residues serine 244, serine 261, and serine 282 each carry the phosphoserine modification. The 238-residue stretch at 283–520 (DHDLKPNAAT…PKTHEMYLNV (238 aa)) folds into the PIK helical domain. Residues 447–467 (TSPLPSVSSPPPASKTKEVPD) form a disordered region. One can recognise a PI3K/PI4K catalytic domain in the interval 605 to 871 (IPETATLFKS…LIDESVHALF (267 aa)). The tract at residues 611–617 (LFKSALM) is G-loop. The segment at 740–748 (GVGDRHLDN) is catalytic loop. Residues 759–780 (HIDFGYILGRDPKPLPPPMKLN) form an activation loop region.

This sequence belongs to the PI3/PI4-kinase family. As to quaternary structure, component of the PI3K (PI3KC3/PI3K-III/class III phosphatidylinositol 3-kinase) complex the core of which is composed of the catalytic subunit PIK3C3, the regulatory subunit PIK3R4 and BECN1 associating with additional regulatory/auxiliary subunits to form alternative complex forms. Alternative complex forms containing a fourth regulatory subunit in a mutually exclusive manner are: the PI3K complex I (PI3KC3-C1) containing ATG14, and the PI3K complex II (PI3KC3-C2) containing UVRAG. PI3KC3-C1 displays a V-shaped architecture with PIK3R4 serving as a bridge between PIK3C3 and the ATG14:BECN1 subcomplex. Both, PI3KC3-C1 and PI3KC3-C2, can associate with further regulatory subunits such as RUBCN, SH3GLB1/Bif-1 and AMBRA1. PI3KC3-C1 probably associates with PIK3CB. Interacts with RAB7A in the presence of PIK3R4. Interacts with AMBRA1. Interacts with BECN1P1/BECN2. Interacts with SLAMF1. May be a component of a complex composed of RAB5A (in GDP-bound form), DYN2 and PIK3C3. Interacts with NCKAP1L. Interacts with ATG14; this interaction is increased in the absence of TMEM39A. Interacts with STEEP1; the interaction is STING1-dependent and required for trafficking of STING1 from the endoplasmic reticulum. Interacts with YWHAG. Interacts with ARMC3. The cofactor is Mn(2+). In terms of processing, ubiquitinated via 'Lys-29'- and 'Lys-48'-linked ubiquitination by UBE3C, promoting its degradation. Deubiquitination by ZRANB1/TRABID promotes its stabilization, leading to autophagosome maturation. In terms of tissue distribution, ubiquitously expressed, with a highest expression in skeletal muscle.

It localises to the midbody. It is found in the late endosome. Its subcellular location is the cytoplasmic vesicle. The protein localises to the autophagosome. It carries out the reaction a 1,2-diacyl-sn-glycero-3-phospho-(1D-myo-inositol) + ATP = a 1,2-diacyl-sn-glycero-3-phospho-(1D-myo-inositol-3-phosphate) + ADP + H(+). Its function is as follows. Catalytic subunit of the PI3K complex that mediates formation of phosphatidylinositol 3-phosphate; different complex forms are believed to play a role in multiple membrane trafficking pathways: PI3KC3-C1 is involved in initiation of autophagosomes and PI3KC3-C2 in maturation of autophagosomes and endocytosis. As part of PI3KC3-C1, promotes endoplasmic reticulum membrane curvature formation prior to vesicle budding. Involved in regulation of degradative endocytic trafficking and required for the abscission step in cytokinesis, probably in the context of PI3KC3-C2. Involved in the transport of lysosomal enzyme precursors to lysosomes. Required for transport from early to late endosomes. In terms of biological role, (Microbial infection) Kinase activity is required for SARS coronavirus-2/SARS-CoV-2 replication. The polypeptide is Phosphatidylinositol 3-kinase catalytic subunit type 3 (Homo sapiens (Human)).